We begin with the raw amino-acid sequence, 542 residues long: Chaperonin GroEL (542 aa).

ATP-binding positions include 29-32, 86-90, G414, and D491; these read TLGP and DGTTT.

Belongs to the chaperonin (HSP60) family. In terms of assembly, forms a cylinder of 14 subunits composed of two heptameric rings stacked back-to-back. Interacts with the co-chaperonin GroES.

Its subcellular location is the cytoplasm. The enzyme catalyses ATP + H2O + a folded polypeptide = ADP + phosphate + an unfolded polypeptide.. Together with its co-chaperonin GroES, plays an essential role in assisting protein folding. The GroEL-GroES system forms a nano-cage that allows encapsulation of the non-native substrate proteins and provides a physical environment optimized to promote and accelerate protein folding. This chain is Chaperonin GroEL, found in Desulforamulus reducens (strain ATCC BAA-1160 / DSM 100696 / MI-1) (Desulfotomaculum reducens).